Reading from the N-terminus, the 396-residue chain is S-adenosylmethionine synthase (396 aa).

Histidine 15 lines the ATP pocket. Aspartate 17 lines the Mg(2+) pocket. Glutamate 43 is a K(+) binding site. 2 residues coordinate L-methionine: glutamate 56 and glutamine 99. Residues 99–109 form a flexible loop region; that stretch reads QSPDIALGVNR. Residues 175–177, 241–242, aspartate 250, 256–257, alanine 273, and lysine 277 contribute to the ATP site; these read DGK, RF, and RK. Aspartate 250 is a binding site for L-methionine. Lysine 281 provides a ligand contact to L-methionine.

The protein belongs to the AdoMet synthase family. In terms of assembly, homotetramer; dimer of dimers. Requires Mg(2+) as cofactor. It depends on K(+) as a cofactor.

The protein resides in the cytoplasm. It carries out the reaction L-methionine + ATP + H2O = S-adenosyl-L-methionine + phosphate + diphosphate. It functions in the pathway amino-acid biosynthesis; S-adenosyl-L-methionine biosynthesis; S-adenosyl-L-methionine from L-methionine: step 1/1. In terms of biological role, catalyzes the formation of S-adenosylmethionine (AdoMet) from methionine and ATP. The overall synthetic reaction is composed of two sequential steps, AdoMet formation and the subsequent tripolyphosphate hydrolysis which occurs prior to release of AdoMet from the enzyme. The chain is S-adenosylmethionine synthase from Carboxydothermus hydrogenoformans (strain ATCC BAA-161 / DSM 6008 / Z-2901).